A 593-amino-acid chain; its full sequence is Acetyl-coenzyme A transferase nodX (593 aa).

Positions 572 to 593 (DEDEQGSGFRSGSGLGSGSIAD) are disordered. A compositionally biased stretch (gly residues) spans 580–593 (FRSGSGLGSGSIAD).

It belongs to the CoA-transferase III family.

Its pathway is secondary metabolite biosynthesis. Functionally, acetyl-coenzyme A transferase; part of the gene cluster that mediates the biosynthesis of the indole diterpenes nodulisporic acids (NA). Nodulisporic acid A (NAA) and its chemically modified derivatives are of particular significance because of their highly potent insecticidal activity against blood-feeding arthropods and lack of observable adverse effects on mammals, in particular the tremogenicity associated with the paspaline-derived IDTs is not observed. The geranylgeranyl diphosphate (GGPP) synthase ggs1, localized outside of the cluster, is proposed to catalyze the first step in nodulisporic acid biosynthesis via conversion of farnesyl pyrophosphate and isopentyl pyrophosphate into geranylgeranyl pyrophosphate (GGPP). Condensation of indole-3-glycerol phosphate with GGPP by the prenyl transferase nodC then forms 3-geranylgeranylindole (3-GGI). Epoxidation by the FAD-dependent monooxygenase nodM leads to a single-epoxidized-GGI that is substrate of the terpene cyclase nodB for cyclization to yield emindole SB. The terminal methyl carbon, C28, of emindole SB is then oxidized by the cytochrome P450 monooxygenase nodW to produce nodulisporic acid F (NAF), the pentacyclic core of NAA. NAF is converted to nodulisporic acid E (NAE) via prenylation. This step is probably performed by one of the indole diterpene prenyltransferases nodD1 or nodD2. Several oxidation steps performed by the FAD-linked oxidoreductase nodO and one of the cytochrome P450 monooxygenase nodR, nodX or nodZ further convert NAE to nodulisporic acid D (NAD). NAD is substrate of cytochrome P450 monooxygenase nodJ to produce the precursor of nodulisporic acid C (NAC), converted to NAC by one of the indole diterpene prenyltransferases nodD1 or nodD2. The FAD-dependent monooxygenase nodY2 then oxidizes NAC to nodulisporic acid B (NAB). Finally NAB is converted to NAA by one of the cytochrome P450 monooxygenases nodR, nodX or nodZ. In Hypoxylon pulicicidum, this protein is Acetyl-coenzyme A transferase nodX.